The chain runs to 122 residues: Large ribosomal subunit protein bL12 (122 aa).

The protein belongs to the bacterial ribosomal protein bL12 family. In terms of assembly, homodimer. Part of the ribosomal stalk of the 50S ribosomal subunit. Forms a multimeric L10(L12)X complex, where L10 forms an elongated spine to which 2 to 4 L12 dimers bind in a sequential fashion. Binds GTP-bound translation factors.

Functionally, forms part of the ribosomal stalk which helps the ribosome interact with GTP-bound translation factors. Is thus essential for accurate translation. The polypeptide is Large ribosomal subunit protein bL12 (Staphylococcus epidermidis (strain ATCC 35984 / DSM 28319 / BCRC 17069 / CCUG 31568 / BM 3577 / RP62A)).